The following is a 293-amino-acid chain: Ribosomal protein L11 methyltransferase (293 aa).

S-adenosyl-L-methionine contacts are provided by Thr145, Gly166, Asp188, and Asn230.

The protein belongs to the methyltransferase superfamily. PrmA family.

It localises to the cytoplasm. It catalyses the reaction L-lysyl-[protein] + 3 S-adenosyl-L-methionine = N(6),N(6),N(6)-trimethyl-L-lysyl-[protein] + 3 S-adenosyl-L-homocysteine + 3 H(+). In terms of biological role, methylates ribosomal protein L11. This chain is Ribosomal protein L11 methyltransferase, found in Salmonella newport (strain SL254).